Reading from the N-terminus, the 615-residue chain is Sterol 3-beta-glucosyltransferase UGT80B1 (615 aa).

The segment at Met-1–His-54 is disordered. Residues Asp-40 to His-54 show a composition bias toward basic and acidic residues.

Belongs to the glycosyltransferase 28 family. In terms of tissue distribution, expressed in developing seeds, seedlings, leaves and around the apical tip of cotyledons. In embryo, expressed in the seed coat and cotyledons.

The catalysed reaction is a sterol + UDP-alpha-D-glucose = a sterol 3-beta-D-glucoside + UDP + H(+). Involved in the biosynthesis of sterol glucosides. Catalyzes the synthesis of steryl glycosides (SGs) and acyl steryl glycosides (ASGs) which are the most abundant sterol derivatives in higher plants. Can act on several sterols like sitosterol, campesterol and stigmasterol. Is required for embryonic development, seed suberin accumulation, cutin formation and flavanoid accumulation in the seed coat. Both UGT80A2 and UGT80B1 are required for the normal production of SGs and ASGs in seeds. This Arabidopsis thaliana (Mouse-ear cress) protein is Sterol 3-beta-glucosyltransferase UGT80B1.